Here is a 156-residue protein sequence, read N- to C-terminus: Small ribosomal subunit protein uS7 (156 aa).

Belongs to the universal ribosomal protein uS7 family. Part of the 30S ribosomal subunit. Contacts proteins S9 and S11.

One of the primary rRNA binding proteins, it binds directly to 16S rRNA where it nucleates assembly of the head domain of the 30S subunit. Is located at the subunit interface close to the decoding center, probably blocks exit of the E-site tRNA. The sequence is that of Small ribosomal subunit protein uS7 from Brachyspira hyodysenteriae (strain ATCC 49526 / WA1).